A 701-amino-acid polypeptide reads, in one-letter code: Polyribonucleotide nucleotidyltransferase (701 aa).

Aspartate 490 and aspartate 496 together coordinate Mg(2+). The 60-residue stretch at proline 557–isoleucine 616 folds into the KH domain. The S1 motif domain occupies glycine 626–arginine 694.

Belongs to the polyribonucleotide nucleotidyltransferase family. Requires Mg(2+) as cofactor.

The protein localises to the cytoplasm. It carries out the reaction RNA(n+1) + phosphate = RNA(n) + a ribonucleoside 5'-diphosphate. In terms of biological role, involved in mRNA degradation. Catalyzes the phosphorolysis of single-stranded polyribonucleotides processively in the 3'- to 5'-direction. The sequence is that of Polyribonucleotide nucleotidyltransferase from Staphylococcus carnosus (strain TM300).